Here is a 432-residue protein sequence, read N- to C-terminus: Adenylosuccinate synthetase (432 aa).

GTP is bound by residues 13–19 and 41–43; these read GDEGKGK and GHT. The active-site Proton acceptor is aspartate 14. Mg(2+) contacts are provided by aspartate 14 and glycine 41. IMP contacts are provided by residues 14-17, 39-42, threonine 130, arginine 144, glutamine 225, threonine 240, and arginine 304; these read DEGK and NAGH. Histidine 42 (proton donor) is an active-site residue. Position 300-306 (300-306) interacts with substrate; the sequence is ATTGRKR. Residues arginine 306, 332–334, and 415–417 each bind GTP; these read KLD and STG.

It belongs to the adenylosuccinate synthetase family. Homodimer. It depends on Mg(2+) as a cofactor.

It is found in the cytoplasm. It carries out the reaction IMP + L-aspartate + GTP = N(6)-(1,2-dicarboxyethyl)-AMP + GDP + phosphate + 2 H(+). It functions in the pathway purine metabolism; AMP biosynthesis via de novo pathway; AMP from IMP: step 1/2. In terms of biological role, plays an important role in the de novo pathway of purine nucleotide biosynthesis. Catalyzes the first committed step in the biosynthesis of AMP from IMP. The sequence is that of Adenylosuccinate synthetase from Alteromonas mediterranea (strain DSM 17117 / CIP 110805 / LMG 28347 / Deep ecotype).